A 424-amino-acid polypeptide reads, in one-letter code: D-inositol 3-phosphate glycosyltransferase (424 aa).

Histidine 20 provides a ligand contact to 1D-myo-inositol 3-phosphate. Residues 26–27 (QP) and glycine 34 each bind UDP-N-acetyl-alpha-D-glucosamine. 1D-myo-inositol 3-phosphate-binding positions include 31–36 (DAGGMN), lysine 89, tyrosine 122, threonine 146, and arginine 166. Residues arginine 240, lysine 245, and methionine 306 each coordinate UDP-N-acetyl-alpha-D-glucosamine. The Mg(2+) site is built by tyrosine 315, arginine 316, and alanine 318. 2 residues coordinate UDP-N-acetyl-alpha-D-glucosamine: glutamate 328 and glutamate 336. Threonine 342 serves as a coordination point for Mg(2+).

It belongs to the glycosyltransferase group 1 family. MshA subfamily. In terms of assembly, homodimer.

The enzyme catalyses 1D-myo-inositol 3-phosphate + UDP-N-acetyl-alpha-D-glucosamine = 1D-myo-inositol 2-acetamido-2-deoxy-alpha-D-glucopyranoside 3-phosphate + UDP + H(+). Functionally, catalyzes the transfer of a N-acetyl-glucosamine moiety to 1D-myo-inositol 3-phosphate to produce 1D-myo-inositol 2-acetamido-2-deoxy-glucopyranoside 3-phosphate in the mycothiol biosynthesis pathway. This chain is D-inositol 3-phosphate glycosyltransferase, found in Kribbella flavida (strain DSM 17836 / JCM 10339 / NBRC 14399).